The sequence spans 241 residues: Uracil-DNA glycosylase (241 aa).

The Proton acceptor role is filled by Asp-71. The segment at 221–241 (ISPIDWSLPPRNELDTTSAGA) is disordered.

This sequence belongs to the uracil-DNA glycosylase (UDG) superfamily. UNG family.

Its subcellular location is the cytoplasm. The enzyme catalyses Hydrolyzes single-stranded DNA or mismatched double-stranded DNA and polynucleotides, releasing free uracil.. Excises uracil residues from the DNA which can arise as a result of misincorporation of dUMP residues by DNA polymerase or due to deamination of cytosine. This is Uracil-DNA glycosylase from Xanthomonas oryzae pv. oryzae (strain MAFF 311018).